The following is a 127-amino-acid chain: MVNIDLKDAGGLPLAYLGDAVWELTVREYFVEKGYKINTMNKKVKKLVNAKAQSVIFKSILEDLDEDYKAVARRAKNSNIKSFPRSCSIMEYREATAFEALIAAFYINGETCRIKKILENHISEGEK.

Residue Asp19 is part of the active site.

It belongs to the MrnC RNase family.

Functionally, might be a ribonuclease involved in RNA processing. The sequence is that of Mini-ribonuclease 3-like protein (mrnCL) from Ilyobacter polytropus (strain ATCC 51220 / DSM 2926 / LMG 16218 / CuHBu1).